A 399-amino-acid chain; its full sequence is Serine/threonine-protein kinase PknL (399 aa).

Topologically, residues Met-1 to Arg-368 are cytoplasmic. The region spanning Tyr-19–Ile-278 is the Protein kinase domain. Residues Ile-25–Val-33 and Lys-48 contribute to the ATP site. Asp-142 (proton acceptor) is an active-site residue. The segment at Gly-312–Pro-346 is disordered. Residues Met-369–Trp-389 form a helical membrane-spanning segment. The Extracellular portion of the chain corresponds to Thr-390–Leu-399.

The protein belongs to the protein kinase superfamily. Ser/Thr protein kinase family. In terms of processing, autophosphorylated.

The protein localises to the cell membrane. It catalyses the reaction L-seryl-[protein] + ATP = O-phospho-L-seryl-[protein] + ADP + H(+). The enzyme catalyses L-threonyl-[protein] + ATP = O-phospho-L-threonyl-[protein] + ADP + H(+). In Mycobacterium bovis (strain ATCC BAA-935 / AF2122/97), this protein is Serine/threonine-protein kinase PknL (pknL).